Consider the following 370-residue polypeptide: ABSCISIC ACID-INSENSITIVE 5-like protein 8 (370 aa).

Phosphoserine is present on residues Ser25, Ser44, and Ser69. A disordered region spans residues 56–77 (SAEETQEGSQRQGSTTLPPTLS). Residues 62–77 (EGSQRQGSTTLPPTLS) show a composition bias toward polar residues. Phosphothreonine is present on Thr111. The segment covering 260–278 (ESSLLSPSPYISNGSTSTR) has biased composition (polar residues). The disordered stretch occupies residues 260 to 281 (ESSLLSPSPYISNGSTSTRGGK). The bZIP domain maps to 293 to 356 (VDKKLRRKIK…MEPGMISLHE (64 aa)). Positions 295 to 314 (KKLRRKIKNRESAARSRARK) are basic motif. Residues 328-342 (LKKDYEELLKQHVEL) form a leucine-zipper region. Residues 349–370 (PGMISLHERPERKLRRTKSDIK) are disordered. The segment covering 354–370 (LHERPERKLRRTKSDIK) has biased composition (basic and acidic residues).

This sequence belongs to the bZIP family. ABI5 subfamily. As to quaternary structure, DNA-binding heterodimer.

It is found in the nucleus. Functionally, could participate in abscisic acid-regulated gene expression. This chain is ABSCISIC ACID-INSENSITIVE 5-like protein 8 (BZIP15), found in Arabidopsis thaliana (Mouse-ear cress).